The primary structure comprises 1158 residues: Voltage-gated inwardly rectifying potassium channel KCNH2 (1158 aa).

The Cytoplasmic segment spans residues 1–402 (MPVRRGHVAP…RIHRWTILHY (402 aa)). A PAS domain is found at 17 to 88 (TIIRKFEGQS…AAQIAQALLG (72 aa)). Positions 92-144 (RKVEIAFYRKDGSCFLCLVDVVPVKNEDGAVIMFILNFEVVMEKDMVGSPTHD) constitute a PAC domain. The disordered stretch occupies residues 232–314 (RALVGSSSPP…GAMHPLRGGL (83 aa)). Residue S239 is modified to Phosphoserine. Residues 258 to 269 (PDASGSSCSLAR) show a composition bias toward polar residues. Residues S283, S284, S319, and S350 each carry the phosphoserine modification. The helical transmembrane segment at 403 to 423 (SPFKAVWDWLILLLVIYTAVF) threads the bilayer. Residues 424-449 (TPYSAAFLLKETEEGPPAPDCGYACQ) lie on the Extracellular side of the membrane. Residues 450–470 (PLAVVDFIVDIMFIVDILINF) form a helical membrane-spanning segment. The Cytoplasmic portion of the chain corresponds to 471–494 (RTTYVNANEEVVSHPGRIAVHYFK). The chain crosses the membrane as a helical span at residues 495 to 515 (GWFLIDMVAAIPFDLLIFGSG). Residues 516–519 (SEEL) are Extracellular-facing. The chain crosses the membrane as a helical; Voltage-sensor span at residues 520–540 (IGLLKTARLLRLVRVARKLDR). Residues 541-546 (YSEYGA) are Cytoplasmic-facing. The chain crosses the membrane as a helical span at residues 547–567 (AVLFLLMCTFALIAHWLACIW). The Extracellular segment spans residues 568-610 (YAIGNMEQPHMDSRIGWLHNLGDQIGKPYNSSGLGGPSIKDKY). The N-linked (GlcNAc...) asparagine glycan is linked to N597. The pore-forming intramembrane region spans 611–631 (VTALYFTFSSLTSVGFGNVSP). Positions 623 to 628 (SVGFGN) match the Selectivity filter motif. Residues 632-637 (NTNSEK) lie on the Extracellular side of the membrane. The helical transmembrane segment at 638–658 (IFSICVMLIGSLMYASIFGNV) threads the bilayer. Over 659–1158 (SAIIQRLYSG…LHRHGSDPGS (500 aa)) the chain is Cytoplasmic. The tract at residues 741–841 (PFRGATKGCL…IHRDDLLEVL (101 aa)) is cNMP-binding domain. Residues 869–987 (GSPGSAELEG…KSSDTCNPLS (119 aa)) form a disordered region. Phosphoserine is present on residues S870 and S873. Over residues 882–891 (RQRKRKLSFR) the composition is skewed to basic residues. A compositionally biased stretch (gly residues) spans 910-926 (GRAGAGPSGRGRPGGPW). The span at 927 to 938 (GESPSSGPSSPE) shows a compositional bias: low complexity. Pro residues predominate over residues 959-969 (SPRPPGEPPGG). The residue at position 1013 (R1013) is an Omega-N-methylarginine. Positions 1034-1061 (RGDVEGRLDALQRQLNRLETRLSADMAT) form a coiled coil. Residues 1116 to 1158 (FEELPPGAPELPQDGPPRRLSLPGQLGALTSQPLHRHGSDPGS) are disordered. At S1136 the chain carries Phosphoserine.

Belongs to the potassium channel family. H (Eag) (TC 1.A.1.20) subfamily. Kv11.1/KCNH2 sub-subfamily. As to quaternary structure, the potassium channel is probably composed of a homo- or heterotetrameric complex of pore-forming alpha subunits that can associate with modulating beta subunits. Interacts with DNAJB12 and DNAJB14; chaperones DNAJB12 and DNAJB14 promote tetramerization. Heteromultimer with KCNH6/ERG2 and KCNH7/ERG3. Interacts with ALG10B. Forms a stable complex with KCNE1 or KCNE2, and that this heteromultimerization regulates Inward rectifier potassium channel activity. Interacts with CANX. The core-glycosylated, but not the fully glycosylated form interacts with RNF207. Interacts with NDFIP1 and NDFIP2; this interaction decreases the cell membrane expression by targeting KCNH2, through interaction with NEDD4L, for the degradation through the multivesicular bodies (MVBs)-lysosomal pathway. In terms of processing, phosphorylated on serine and threonine residues. Phosphorylation by PKA inhibits ion conduction. Highly expressed in left and right atria of the heart, in cortex and hippocampus; detected at intermediate levels in left and right ventricle, Purkinje fibers, cerebellum, thalamus and basal ganglia; detected at low levels in liver, spleen and kidney.

The protein localises to the cell membrane. It carries out the reaction K(+)(in) = K(+)(out). Functionally, pore-forming (alpha) subunit of voltage-gated inwardly rectifying potassium channel. Characterized by unusual gating kinetics by producing relatively small outward currents during membrane depolarization and large inward currents during subsequent repolarization which reflect a rapid inactivation during depolarization and quick recovery from inactivation but slow deactivation (closing) during repolarization. Channel properties are modulated by cAMP and subunit assembly. Forms a stable complex with KCNE1 or KCNE2, and that this heteromultimerization regulates inward rectifier potassium channel activity. The sequence is that of Voltage-gated inwardly rectifying potassium channel KCNH2 from Canis lupus familiaris (Dog).